The sequence spans 335 residues: Ketol-acid reductoisomerase (NADP(+)) (335 aa).

The KARI N-terminal Rossmann domain occupies 2–182 (VEMFYDKDAD…GCTRAGVIET (181 aa)). Residues 25–28 (YGSQ), Arg-48, Ser-51, and 83–86 (DEIQ) each bind NADP(+). His-108 is an active-site residue. Gly-134 serves as a coordination point for NADP(+). One can recognise a KARI C-terminal knotted domain in the interval 183-328 (TFREETETDL…KKLRAMMPWL (146 aa)). Residues Asp-191, Glu-195, Glu-227, and Glu-231 each coordinate Mg(2+). Ser-252 contributes to the substrate binding site.

Belongs to the ketol-acid reductoisomerase family. Mg(2+) serves as cofactor.

It catalyses the reaction (2R)-2,3-dihydroxy-3-methylbutanoate + NADP(+) = (2S)-2-acetolactate + NADPH + H(+). It carries out the reaction (2R,3R)-2,3-dihydroxy-3-methylpentanoate + NADP(+) = (S)-2-ethyl-2-hydroxy-3-oxobutanoate + NADPH + H(+). The protein operates within amino-acid biosynthesis; L-isoleucine biosynthesis; L-isoleucine from 2-oxobutanoate: step 2/4. Its pathway is amino-acid biosynthesis; L-valine biosynthesis; L-valine from pyruvate: step 2/4. Its function is as follows. Involved in the biosynthesis of branched-chain amino acids (BCAA). Catalyzes an alkyl-migration followed by a ketol-acid reduction of (S)-2-acetolactate (S2AL) to yield (R)-2,3-dihydroxy-isovalerate. In the isomerase reaction, S2AL is rearranged via a Mg-dependent methyl migration to produce 3-hydroxy-3-methyl-2-ketobutyrate (HMKB). In the reductase reaction, this 2-ketoacid undergoes a metal-dependent reduction by NADPH to yield (R)-2,3-dihydroxy-isovalerate. In Methanococcoides burtonii (strain DSM 6242 / NBRC 107633 / OCM 468 / ACE-M), this protein is Ketol-acid reductoisomerase (NADP(+)).